A 413-amino-acid chain; its full sequence is MATIPMDIVNDIFLRLPAKTLVRCRALSKPCYHLINDPDFIESHLHRVLQTGDHLMILLRGALRLYSVDLDSLDSVSDVEHPMKRGGPTEVFGSSNGLIGLSNSPTDLAVFNPSTRQIHRLPPSSIDLPDGSSTRGYVFYGLGYDSVSDDYKVVRMVQFKIDSEDELGCSFPYEVKVFSLKKNSWKRIESVASSIQLLFYFYYHLLYRRGYGVLAGNSLHWVLPRRPGLIAFNLIVRFDLALEEFEIVRFPEAVANGNVDIQMDIGVLDGCLCLMCNYDQSYVDVWMMKEYNVRDSWTKVFTVQKPKSVKSFSYMRPLVYSKDKKKVLLELNNTKLVWFDLESKKMSTLRIKDCPSSYSAELVVSSLVLGCKGDLNNIKYRKEQQAKEAREAKIMQNTKRRDDFLSKGFKLVL.

An F-box domain is found at M1 to V48.

In terms of assembly, part of a SCF (ASK-cullin-F-box) protein ligase complex. Interacts with SKP1A/ASK1, SPK1B/ASK2, ASK9, ASK10, ASK11, ASK13, ASK14, ASK16, ASK17, ASK18 and ASK19. Interacts with TRAF1B. In terms of tissue distribution, expressed in seedling, root, stem, leaves, inflorescence and silique, especially in veins and trichomes.

The protein localises to the cytoplasm. It is found in the nucleus. Its pathway is protein modification; protein ubiquitination. Functionally, component of SCF(ASK-cullin-F-box) E3 ubiquitin ligase complexes, which may mediate the ubiquitination and subsequent proteasomal degradation of target proteins. Regulates negatively both salicylic acid (SA)-dependent and SA-independent defense signaling. This chain is F-box protein CPR1 (CPR1), found in Arabidopsis thaliana (Mouse-ear cress).